Consider the following 332-residue polypeptide: Ketol-acid reductoisomerase (NADP(+)) (332 aa).

The KARI N-terminal Rossmann domain maps to alanine 4–threonine 184. NADP(+) is bound by residues tyrosine 27–glutamine 30, serine 53, serine 55, and aspartate 85–glutamine 88. Residue histidine 110 is part of the active site. An NADP(+)-binding site is contributed by glycine 136. A KARI C-terminal knotted domain is found at threonine 185–leucine 330. Aspartate 193, glutamate 197, glutamate 229, and glutamate 233 together coordinate Mg(2+). Serine 254 lines the substrate pocket.

This sequence belongs to the ketol-acid reductoisomerase family. Mg(2+) serves as cofactor.

The catalysed reaction is (2R)-2,3-dihydroxy-3-methylbutanoate + NADP(+) = (2S)-2-acetolactate + NADPH + H(+). It catalyses the reaction (2R,3R)-2,3-dihydroxy-3-methylpentanoate + NADP(+) = (S)-2-ethyl-2-hydroxy-3-oxobutanoate + NADPH + H(+). Its pathway is amino-acid biosynthesis; L-isoleucine biosynthesis; L-isoleucine from 2-oxobutanoate: step 2/4. It participates in amino-acid biosynthesis; L-valine biosynthesis; L-valine from pyruvate: step 2/4. Functionally, involved in the biosynthesis of branched-chain amino acids (BCAA). Catalyzes an alkyl-migration followed by a ketol-acid reduction of (S)-2-acetolactate (S2AL) to yield (R)-2,3-dihydroxy-isovalerate. In the isomerase reaction, S2AL is rearranged via a Mg-dependent methyl migration to produce 3-hydroxy-3-methyl-2-ketobutyrate (HMKB). In the reductase reaction, this 2-ketoacid undergoes a metal-dependent reduction by NADPH to yield (R)-2,3-dihydroxy-isovalerate. The chain is Ketol-acid reductoisomerase (NADP(+)) from Gloeobacter violaceus (strain ATCC 29082 / PCC 7421).